Here is a 177-residue protein sequence, read N- to C-terminus: Large ribosomal subunit protein uL6 (177 aa).

The protein belongs to the universal ribosomal protein uL6 family. Part of the 50S ribosomal subunit.

Its function is as follows. This protein binds to the 23S rRNA, and is important in its secondary structure. It is located near the subunit interface in the base of the L7/L12 stalk, and near the tRNA binding site of the peptidyltransferase center. The chain is Large ribosomal subunit protein uL6 from Methylibium petroleiphilum (strain ATCC BAA-1232 / LMG 22953 / PM1).